The following is a 599-amino-acid chain: Adenine deaminase (599 aa).

The protein belongs to the metallo-dependent hydrolases superfamily. Adenine deaminase family. The cofactor is Mn(2+).

It carries out the reaction adenine + H2O + H(+) = hypoxanthine + NH4(+). This is Adenine deaminase from Clostridium botulinum (strain Langeland / NCTC 10281 / Type F).